The sequence spans 124 residues: Conotoxin Cl14.12 (124 aa).

The N-terminal stretch at 1-17 is a signal peptide; it reads MKVAVVLLVSLLAVTYA. Positions 18–74 are excised as a propeptide; that stretch reads LPEKRIFFGGIVDKVKDTFTKIFNKAKETFDKITDGFDVDFDEVVDKLIAQIHSTPT.

In terms of processing, contains 2 disulfide bond. Expressed by the venom duct.

The protein resides in the secreted. The protein is Conotoxin Cl14.12 of Californiconus californicus (California cone).